Reading from the N-terminus, the 240-residue chain is Thiopurine S-methyltransferase (240 aa).

S-adenosyl-L-methionine is bound at residue 24–35 (WQDKWVTRHIAF). Substrate is bound at residue Phe-35. Position 53 is an N6-acetyllysine (Lys-53). Residues Leu-64, Glu-85, 129-130 (SI), and Arg-147 contribute to the S-adenosyl-L-methionine site.

Belongs to the class I-like SAM-binding methyltransferase superfamily. TPMT family. In terms of assembly, monomer.

It is found in the cytoplasm. The catalysed reaction is S-adenosyl-L-methionine + a thiopurine = S-adenosyl-L-homocysteine + a thiopurine S-methylether.. It catalyses the reaction mercaptopurine + S-adenosyl-L-methionine = 6-methylthiopurine + S-adenosyl-L-homocysteine + H(+). Its function is as follows. Catalyzes the S-methylation of thiopurine drugs such as 6-mercaptopurine (also called mercaptopurine, 6-MP or its brand name Purinethol) using S-adenosyl-L-methionine as the methyl donor. TPMT activity modulates the cytotoxic effects of thiopurine prodrugs. A natural substrate for this enzyme has yet to be identified. The protein is Thiopurine S-methyltransferase (Tpmt) of Rattus norvegicus (Rat).